A 322-amino-acid chain; its full sequence is tRNA uridine(34) hydroxylase (322 aa).

The Rhodanese domain occupies 125–219 (QSPDTVVIDA…YGKDPEVQGK (95 aa)). Cysteine 179 acts as the Cysteine persulfide intermediate in catalysis.

Belongs to the TrhO family.

It carries out the reaction uridine(34) in tRNA + AH2 + O2 = 5-hydroxyuridine(34) in tRNA + A + H2O. Its function is as follows. Catalyzes oxygen-dependent 5-hydroxyuridine (ho5U) modification at position 34 in tRNAs. In Bacillus pumilus (strain SAFR-032), this protein is tRNA uridine(34) hydroxylase.